The primary structure comprises 187 residues: Elongation factor P (187 aa).

The protein belongs to the elongation factor P family.

Its subcellular location is the cytoplasm. Its pathway is protein biosynthesis; polypeptide chain elongation. Functionally, involved in peptide bond synthesis. Stimulates efficient translation and peptide-bond synthesis on native or reconstituted 70S ribosomes in vitro. Probably functions indirectly by altering the affinity of the ribosome for aminoacyl-tRNA, thus increasing their reactivity as acceptors for peptidyl transferase. This Tolumonas auensis (strain DSM 9187 / NBRC 110442 / TA 4) protein is Elongation factor P.